Consider the following 141-residue polypeptide: Transmembrane protein 216 (141 aa).

4 helical membrane passes run Val15–Phe35, Leu49–Phe69, Leu82–Leu102, and Ser115–Phe135.

Part of the tectonic-like complex (also named B9 complex). Interacts with TMEM107.

Its subcellular location is the membrane. The protein localises to the cytoplasm. It localises to the cytoskeleton. The protein resides in the cilium basal body. Part of the tectonic-like complex which is required for tissue-specific ciliogenesis and may regulate ciliary membrane composition. The sequence is that of Transmembrane protein 216 (Tmem216) from Mus musculus (Mouse).